A 421-amino-acid polypeptide reads, in one-letter code: ATP-dependent RNA helicase RhlB (421 aa).

A Q motif motif is present at residues 9–37 (QKFSDFSLHPKVVEALEKKGFHNCTPIQA). The Helicase ATP-binding domain occupies 40–219 (LPLTLAGRDV…FEQMNNAEYI (180 aa)). 53 to 60 (AQTGTGKT) is a binding site for ATP. The short motif at 165-168 (DEAD) is the DEAD box element. Residues 245–390 (RLLQTLIEEE…VSKYNPDALM (146 aa)) enclose the Helicase C-terminal domain. The segment at 392–421 (DLPKPLRLTRPRTGNGPRRTGAPRNRRRSG) is disordered. Residues 402–414 (PRTGNGPRRTGAP) show a composition bias toward low complexity.

It belongs to the DEAD box helicase family. RhlB subfamily. Component of the RNA degradosome, which is a multiprotein complex involved in RNA processing and mRNA degradation.

Its subcellular location is the cytoplasm. It catalyses the reaction ATP + H2O = ADP + phosphate + H(+). DEAD-box RNA helicase involved in RNA degradation. Has RNA-dependent ATPase activity and unwinds double-stranded RNA. The sequence is that of ATP-dependent RNA helicase RhlB from Shigella dysenteriae serotype 1 (strain Sd197).